The sequence spans 189 residues: Phosphoheptose isomerase (189 aa).

The 156-residue stretch at 34–189 folds into the SIS domain; it reads LVEAFRKGNK…CDLVEKALFA (156 aa). 49–51 is a substrate binding site; that stretch reads NGG. Positions 58 and 62 each coordinate Zn(2+). Substrate-binding positions include glutamate 62, 91 to 92, 117 to 119, serine 122, and glutamine 169; these read ND and STS. Zn(2+) is bound by residues glutamine 169 and histidine 177.

This sequence belongs to the SIS family. GmhA subfamily. As to quaternary structure, homotetramer. Zn(2+) is required as a cofactor.

The protein resides in the cytoplasm. It carries out the reaction 2 D-sedoheptulose 7-phosphate = D-glycero-alpha-D-manno-heptose 7-phosphate + D-glycero-beta-D-manno-heptose 7-phosphate. Its pathway is carbohydrate biosynthesis; D-glycero-D-manno-heptose 7-phosphate biosynthesis; D-glycero-alpha-D-manno-heptose 7-phosphate and D-glycero-beta-D-manno-heptose 7-phosphate from sedoheptulose 7-phosphate: step 1/1. In terms of biological role, catalyzes the isomerization of sedoheptulose 7-phosphate in D-glycero-D-manno-heptose 7-phosphate. This is Phosphoheptose isomerase from Pelobacter propionicus (strain DSM 2379 / NBRC 103807 / OttBd1).